Here is a 285-residue protein sequence, read N- to C-terminus: Pantothenate synthetase (285 aa).

30 to 37 (MGNLHQGH) is an ATP binding site. H37 (proton donor) is an active-site residue. Q61 is a binding site for (R)-pantoate. Residue Q61 coordinates beta-alanine. 149 to 152 (GQKD) is a binding site for ATP. (R)-pantoate is bound at residue Q155. Residues V178 and 186-189 (LSSR) contribute to the ATP site.

The protein belongs to the pantothenate synthetase family. Homodimer.

It localises to the cytoplasm. The catalysed reaction is (R)-pantoate + beta-alanine + ATP = (R)-pantothenate + AMP + diphosphate + H(+). It functions in the pathway cofactor biosynthesis; (R)-pantothenate biosynthesis; (R)-pantothenate from (R)-pantoate and beta-alanine: step 1/1. Its function is as follows. Catalyzes the condensation of pantoate with beta-alanine in an ATP-dependent reaction via a pantoyl-adenylate intermediate. This chain is Pantothenate synthetase, found in Aeromonas hydrophila subsp. hydrophila (strain ATCC 7966 / DSM 30187 / BCRC 13018 / CCUG 14551 / JCM 1027 / KCTC 2358 / NCIMB 9240 / NCTC 8049).